A 192-amino-acid chain; its full sequence is Protein GrpE (192 aa).

The disordered stretch occupies residues 1–43; that stretch reads MSKEEFPHEKDLKDEVTPDKAPKKDPKAASKEEVKEDPAKDYE.

This sequence belongs to the GrpE family. Homodimer.

It is found in the cytoplasm. Functionally, participates actively in the response to hyperosmotic and heat shock by preventing the aggregation of stress-denatured proteins, in association with DnaK and GrpE. It is the nucleotide exchange factor for DnaK and may function as a thermosensor. Unfolded proteins bind initially to DnaJ; upon interaction with the DnaJ-bound protein, DnaK hydrolyzes its bound ATP, resulting in the formation of a stable complex. GrpE releases ADP from DnaK; ATP binding to DnaK triggers the release of the substrate protein, thus completing the reaction cycle. Several rounds of ATP-dependent interactions between DnaJ, DnaK and GrpE are required for fully efficient folding. The sequence is that of Protein GrpE from Lactobacillus gasseri (strain ATCC 33323 / DSM 20243 / BCRC 14619 / CIP 102991 / JCM 1131 / KCTC 3163 / NCIMB 11718 / NCTC 13722 / AM63).